The sequence spans 680 residues: 1-deoxy-D-xylulose-5-phosphate synthase (680 aa).

Residues H113 and 154–156 (GHS) contribute to the thiamine diphosphate site. D185 provides a ligand contact to Mg(2+). Residues 186–187 (GA), N214, F323, and E408 contribute to the thiamine diphosphate site. N214 contributes to the Mg(2+) binding site.

This sequence belongs to the transketolase family. DXPS subfamily. Homodimer. Requires Mg(2+) as cofactor. The cofactor is thiamine diphosphate.

It catalyses the reaction D-glyceraldehyde 3-phosphate + pyruvate + H(+) = 1-deoxy-D-xylulose 5-phosphate + CO2. Its pathway is metabolic intermediate biosynthesis; 1-deoxy-D-xylulose 5-phosphate biosynthesis; 1-deoxy-D-xylulose 5-phosphate from D-glyceraldehyde 3-phosphate and pyruvate: step 1/1. Its function is as follows. Catalyzes the acyloin condensation reaction between C atoms 2 and 3 of pyruvate and glyceraldehyde 3-phosphate to yield 1-deoxy-D-xylulose-5-phosphate (DXP). The protein is 1-deoxy-D-xylulose-5-phosphate synthase of Psychrobacter arcticus (strain DSM 17307 / VKM B-2377 / 273-4).